Reading from the N-terminus, the 326-residue chain is Putative ribose-phosphate pyrophosphokinase 2 (326 aa).

Residues 43-45 and 102-103 contribute to the ATP site; these read DGE and RQ. H136 contacts Mg(2+). Residues D225 and 229 to 233 contribute to the D-ribose 5-phosphate site; that span reads NTGKT.

Homohexamer. It depends on Mg(2+) as a cofactor.

The protein resides in the cytoplasm. The enzyme catalyses D-ribose 5-phosphate + ATP = 5-phospho-alpha-D-ribose 1-diphosphate + AMP + H(+). Its pathway is metabolic intermediate biosynthesis; 5-phospho-alpha-D-ribose 1-diphosphate biosynthesis; 5-phospho-alpha-D-ribose 1-diphosphate from D-ribose 5-phosphate (route I): step 1/1. Functionally, involved in the biosynthesis of the central metabolite phospho-alpha-D-ribosyl-1-pyrophosphate (PRPP) via the transfer of pyrophosphoryl group from ATP to 1-hydroxyl of ribose-5-phosphate (Rib-5-P). In Streptococcus pyogenes serotype M6 (strain ATCC BAA-946 / MGAS10394), this protein is Putative ribose-phosphate pyrophosphokinase 2.